The chain runs to 937 residues: Glycine dehydrogenase (decarboxylating) (937 aa).

Lysine 686 bears the N6-(pyridoxal phosphate)lysine mark.

This sequence belongs to the GcvP family. In terms of assembly, the glycine cleavage system is composed of four proteins: P, T, L and H. It depends on pyridoxal 5'-phosphate as a cofactor.

The catalysed reaction is N(6)-[(R)-lipoyl]-L-lysyl-[glycine-cleavage complex H protein] + glycine + H(+) = N(6)-[(R)-S(8)-aminomethyldihydrolipoyl]-L-lysyl-[glycine-cleavage complex H protein] + CO2. Its function is as follows. The glycine cleavage system catalyzes the degradation of glycine. The P protein binds the alpha-amino group of glycine through its pyridoxal phosphate cofactor; CO(2) is released and the remaining methylamine moiety is then transferred to the lipoamide cofactor of the H protein. This Mesorhizobium japonicum (strain LMG 29417 / CECT 9101 / MAFF 303099) (Mesorhizobium loti (strain MAFF 303099)) protein is Glycine dehydrogenase (decarboxylating).